The primary structure comprises 695 residues: DUF724 domain-containing protein 3 (695 aa).

A disordered region spans residues 376–464 (ITVTPLKQQD…GTSDTIRVDD (89 aa)). A compositionally biased stretch (basic and acidic residues) spans 384–402 (QDAETEGKKSPKKTPEPVK). The segment covering 434-459 (NQNSNLNETDETCNVSKAGVNGTSDT) has biased composition (polar residues). The DUF724 domain occupies 509–694 (PFTKNLPFWK…LEFITSVLAP (186 aa)). Residues 614-684 (VEERKCLEKR…TIDQEIANVE (71 aa)) adopt a coiled-coil conformation.

In terms of assembly, homodimer.

Its function is as follows. May be involved in the polar growth of plant cells via transportation of RNAs. This chain is DUF724 domain-containing protein 3, found in Arabidopsis thaliana (Mouse-ear cress).